The following is a 161-amino-acid chain: Endoribonuclease YbeY (161 aa).

The Zn(2+) site is built by histidine 121, histidine 125, and histidine 131.

This sequence belongs to the endoribonuclease YbeY family. It depends on Zn(2+) as a cofactor.

The protein localises to the cytoplasm. In terms of biological role, single strand-specific metallo-endoribonuclease involved in late-stage 70S ribosome quality control and in maturation of the 3' terminus of the 16S rRNA. In Xanthomonas axonopodis pv. citri (strain 306), this protein is Endoribonuclease YbeY.